Consider the following 127-residue polypeptide: Glycine cleavage system H protein (127 aa).

The Lipoyl-binding domain occupies 24–106; sequence TATIGITDYA…YAEGWMLKLK (83 aa). An N6-lipoyllysine modification is found at K65.

Belongs to the GcvH family. In terms of assembly, the glycine cleavage system is composed of four proteins: P, T, L and H. It depends on (R)-lipoate as a cofactor.

Its function is as follows. The glycine cleavage system catalyzes the degradation of glycine. The H protein shuttles the methylamine group of glycine from the P protein to the T protein. This Opitutus terrae (strain DSM 11246 / JCM 15787 / PB90-1) protein is Glycine cleavage system H protein.